The chain runs to 362 residues: Methionine import ATP-binding protein MetN (362 aa).

Positions 23 to 258 (VRLTDVKRRF…PQAEITGSLL (236 aa)) constitute an ABC transporter domain. Residue 55-62 (GRSGAGKS) coordinates ATP.

It belongs to the ABC transporter superfamily. Methionine importer (TC 3.A.1.24) family. In terms of assembly, the complex is composed of two ATP-binding proteins (MetN), two transmembrane proteins (MetI) and a solute-binding protein (MetQ).

It is found in the cell inner membrane. It catalyses the reaction L-methionine(out) + ATP + H2O = L-methionine(in) + ADP + phosphate + H(+). It carries out the reaction D-methionine(out) + ATP + H2O = D-methionine(in) + ADP + phosphate + H(+). In terms of biological role, part of the ABC transporter complex MetNIQ involved in methionine import. Responsible for energy coupling to the transport system. This chain is Methionine import ATP-binding protein MetN, found in Rhizobium johnstonii (strain DSM 114642 / LMG 32736 / 3841) (Rhizobium leguminosarum bv. viciae).